The chain runs to 318 residues: Cytochrome f (318 aa).

Residues 1 to 32 (MQNKNNYNWLKEWVIRSFLLLTLLTWPSVSNA) form the signal peptide. Heme is bound by residues Tyr-33, Cys-53, Cys-56, and His-57. Residues 284–304 (IQGLLLFFASVVLAQIFLVLK) form a helical membrane-spanning segment.

Belongs to the cytochrome f family. As to quaternary structure, the 4 large subunits of the cytochrome b6-f complex are cytochrome b6, subunit IV (17 kDa polypeptide, petD), cytochrome f and the Rieske protein, while the 4 small subunits are PetG, PetL, PetM and PetN. The complex functions as a dimer. Heme serves as cofactor.

The protein resides in the plastid. Its subcellular location is the chloroplast thylakoid membrane. In terms of biological role, component of the cytochrome b6-f complex, which mediates electron transfer between photosystem II (PSII) and photosystem I (PSI), cyclic electron flow around PSI, and state transitions. In Angiopteris evecta (Mule's foot fern), this protein is Cytochrome f.